The chain runs to 808 residues: Spindle assembly abnormal protein 4 (808 aa).

The tract at residues 1 to 151 (MASDENIGAD…PDEPSTLVNS (151 aa)) is disordered. A compositionally biased stretch (low complexity) spans 42-54 (PPTSELSSASSPS). Polar residues-rich tracts occupy residues 61–78 (SLSN…SGIS) and 85–104 (PPTT…SPEN). A compositionally biased stretch (basic and acidic residues) spans 113-123 (AEEHGHSGQHA). The segment covering 124–133 (EEEEDNDTDE) has biased composition (acidic residues). Residues 161 to 181 (KYKNAAAEFKAFERRMDSMRS) adopt a coiled-coil conformation. 2 disordered regions span residues 187-206 (TSLA…PPTR) and 271-298 (VTAP…DENR). Residues 280 to 294 (MMNSSRQNPQNGNVQ) show a composition bias toward polar residues. A coiled-coil region spans residues 314–503 (LDRQKLEIEI…ERDDKEKEMF (190 aa)). The span at 511–529 (KTSNPVPPVLNQSVPISIT) shows a compositional bias: polar residues. A disordered region spans residues 511–564 (KTSNPVPPVLNQSVPISITSNGPSRHPSSSSLTTFRKPSTSNRERGVSWADEPN). Residues 530 to 541 (SNGPSRHPSSSS) are compositionally biased toward low complexity. Over residues 542–551 (LTTFRKPSTS) the composition is skewed to polar residues.

Interacts with hyls-1; leading to hyls-1 localization into newly forming centrioles.

The protein localises to the cytoplasm. It localises to the cytoskeleton. It is found in the microtubule organizing center. Its subcellular location is the centrosome. Required for centrosome duplication. Plays a central role in determining centrosome size. In Caenorhabditis elegans, this protein is Spindle assembly abnormal protein 4 (sas-4).